Consider the following 415-residue polypeptide: Membrane-bound ghrelin O-acyltransferase mboat4 (415 aa).

At Met-1 to Trp-6 the chain is on the lumenal side. The helical transmembrane segment at Ile-7–Phe-28 threads the bilayer. Over His-29–Arg-42 the chain is Cytoplasmic. Residues Tyr-43 to Met-58 form a helical membrane-spanning segment. The Lumenal segment spans residues Gly-59–Tyr-61. A helical transmembrane segment spans residues Ser-62–Tyr-78. Topologically, residues Ile-79 to Leu-84 are cytoplasmic. Residues His-85–Val-103 form a helical membrane-spanning segment. Residues Gln-104–Ile-122 are Lumenal-facing. The chain crosses the membrane as a helical span at residues Ser-123–Asp-138. Topologically, residues Phe-139–Thr-193 are cytoplasmic. Residues Ser-194–Lys-214 form a helical membrane-spanning segment. Over Ser-215–Val-227 the chain is Lumenal. Residues Leu-228–Met-247 traverse the membrane as a helical segment. Topologically, residues Ser-248–Arg-312 are cytoplasmic. Residues Asn-295 and His-326 contribute to the active site. Residues Ser-313–His-326 traverse the membrane as a helical segment. Residues Gly-327–Leu-328 are Lumenal-facing. Residues His-329–Ala-345 traverse the membrane as a helical segment. Over Asp-346–Arg-364 the chain is Cytoplasmic. Residues Leu-365 to Val-385 traverse the membrane as a helical segment. Residues Glu-386–Lys-394 are Lumenal-facing. A helical membrane pass occupies residues Leu-395–Leu-415.

Belongs to the membrane-bound acyltransferase family. Monomer. In terms of processing, not glycosylated.

Its subcellular location is the endoplasmic reticulum membrane. It catalyses the reaction octanoyl-CoA + L-seryl-[protein] = O-octanoyl-L-seryl-[protein] + CoA. It carries out the reaction decanoyl-CoA + L-seryl-[protein] = O-decanoyl-L-seryl-[protein] + CoA. The catalysed reaction is L-seryl-[protein] + acetyl-CoA = O-acetyl-L-seryl-[protein] + CoA. The enzyme catalyses L-seryl-[protein] + butanoyl-CoA = O-butanoyl-L-seryl-[protein] + CoA. It catalyses the reaction pentanoyl-CoA + L-seryl-[protein] = O-pentanoyl-L-seryl-[protein] + CoA. It carries out the reaction hexanoyl-CoA + L-seryl-[protein] = O-hexanoyl-L-seryl-[protein] + CoA. The catalysed reaction is heptanoyl-CoA + L-seryl-[protein] = O-heptanoyl-L-seryl-[protein] + CoA. The enzyme catalyses nonanoyl-CoA + L-seryl-[protein] = O-nonanoyl-L-seryl-[protein] + CoA. It catalyses the reaction L-seryl-[protein] + dodecanoyl-CoA = O-dodecanoyl-L-seryl-[protein] + CoA. It carries out the reaction L-seryl-[protein] + tetradecanoyl-CoA = O-tetradecanoyl-L-seryl-[protein] + CoA. The catalysed reaction is a fatty acyl-CoA + L-seryl-[protein] = O-fatty acyl-L-seryl-[protein] + CoA. Catalyzes ghrelin acylation at 'Ser-3' using preferentially octanoyl-CoA, hexanoyl-CoA and decanoyl-CoA as acyl-CoA donors leading to ghrelin activity. In vitro uses also acyl-CoA donors of different lengths from short-chain (C2) to long-chain fatty acids (C16) knowing that acyl-CoA donors from butanoyl-CoA (C4) to dodecanoyl-CoA (C12) are more efficient compared to longer acyl-CoA donors, such as myristoyl-CoA (C14) and palmitoyl-CoA (C16) that are not efficient. This chain is Membrane-bound ghrelin O-acyltransferase mboat4, found in Danio rerio (Zebrafish).